Reading from the N-terminus, the 236-residue chain is Small ribosomal subunit protein uS3 (236 aa).

In terms of domain architecture, KH type-2 spans 39 to 107 (IREFLTEELK…DTSLNIVEVR (69 aa)). The disordered stretch occupies residues 214–236 (ASERRAVEGDNQGSSSNRRRENA).

It belongs to the universal ribosomal protein uS3 family. Part of the 30S ribosomal subunit. Forms a tight complex with proteins S10 and S14.

In terms of biological role, binds the lower part of the 30S subunit head. Binds mRNA in the 70S ribosome, positioning it for translation. The protein is Small ribosomal subunit protein uS3 of Brucella melitensis biotype 1 (strain ATCC 23456 / CCUG 17765 / NCTC 10094 / 16M).